A 262-amino-acid chain; its full sequence is Tetratricopeptide repeat protein 33 (262 aa).

A disordered region spans residues 17–63 (ATSQQFEAEAADEKDAAENEDGNWLQASKRRKETLQEGCKQRSQQLK). TPR repeat units follow at residues 59-92 (SQQL…TPGD), 93-126 (ATLY…NPHS), and 127-160 (WEAW…YPMN). Phosphoserine is present on Ser197.

The chain is Tetratricopeptide repeat protein 33 (Ttc33) from Mus musculus (Mouse).